Consider the following 420-residue polypeptide: Transcription factor IIIB 50 kDa subunit (420 aa).

The segment at 3-36 (NGSRCPDCGSSELVEDSHYSQSQLVCSDCGCVVT) adopts a TFIIB-type zinc-finger fold. Zn(2+)-binding residues include Cys-7, Cys-10, Cys-28, and Cys-31. Tandem repeats lie at residues 72-157 (DLRR…MQMV) and 173-249 (VKSY…SLAQ). Residues 108–114 (AARLQKK) are interaction with target DNA. Residues 316 to 387 (TAEVETQQQQ…AVTGDEDISD (72 aa)) form a disordered region. A compositionally biased stretch (low complexity) spans 322 to 336 (QQQQQQQQGQGQGQQ). Ser-354 carries the phosphoserine modification. The required for the formation of a ternary complex with DNA and TBP; not required for interaction with TBP in the absence of DNA stretch occupies residues 358–364 (LLPPCML). The residue at position 362 (Cys-362) is a Cysteine sulfenic acid (-SOH). Residues 366 to 420 (PPKRTHTLPPESAVTGDEDISDSEIEQYLRTPQEVRDFERAQAASQAAMRVPNPP) are required for interaction with TBP and formation of a ternary complex with DNA and TBP.

The protein belongs to the TFIIB family. Component of TFIIIB complexes. The TFIIIB complex has two activities, alpha and beta. The TFIIIB-alpha activity complex is composed of TBP, BDP1, and a complex containing both BRF2 and at least four stably associated proteins; this complex inhibits the transcription by pol III via its phosphorylation by CK2; YY1 facilitates the TFIIIB-alpha complex formation. Interacts with TBP; this interaction promotes recruitment of BRF2 to TATA box-containing promoters. Interacts with TBP and the BURE sequence (GC-rich sequence downstream from the TATA box) to form a strong ternary complex which is joined by BDP1; this ternary complex stimulates pol III transcription. Forms a trimeric complex composed of TBP, BRF2 and mini-SNAPc complex (SNAP43, SNAP50, and the N-terminal third of SNAP190) on the promoter. Assembly of the TBP-BRF2 complex is stimulated by SNAP190. Interacts with MAF1 and SNAPC4. Post-translationally, in response to oxidative stress, Cys-362 is reversibly oxidized to cysteine sulfenic acid. Oxidation of Cys-362 impairs formation of a ternary complex with TBP and DNA and down-regulates expression of target genes in response to oxidative stress.

The protein resides in the nucleus. In terms of biological role, general activator of RNA polymerase III transcription. Factor exclusively required for RNA polymerase III transcription of genes with promoter elements upstream of the initiation sites. Contributes to the regulation of gene expression; functions as activator in the absence of oxidative stress. Down-regulates expression of target genes in response to oxidative stress. Overexpression protects cells against apoptosis in response to oxidative stress. This is Transcription factor IIIB 50 kDa subunit (Brf2) from Mus musculus (Mouse).